A 238-amino-acid chain; its full sequence is Inactive glycoside hydrolase XLP1 (238 aa).

The signal sequence occupies residues 1 to 19 (MKSFLIAIVIAVLLPVSAA). Glu-133 is an active-site residue. Asn-171 and Asn-187 each carry an N-linked (GlcNAc...) asparagine glycan. Glu-219 is a catalytic residue.

Belongs to the glycosyl hydrolase 12 (cellulase H) family. In terms of assembly, interacts with host apoplastic glucanase inhibitor GIP2.

The protein localises to the secreted. Non-functional secreted XEG1-like protein that binds to host Nicotiana benthamiana apoplastic glucanase inhibitor protein GIP2 more tightly than does XEG1, thus it outcompetes XEG1 for GIP2 binding and frees functional XEG1 to support P.parasitica infection. With XEG1, is required to elevate apoplastic sugar during P.parasitica infection. The sequence is that of Inactive glycoside hydrolase XLP1 from Phytophthora nicotianae (strain INRA-310) (Phytophthora parasitica).